The primary structure comprises 496 residues: Cytochrome P450 71A15 (496 aa).

A helical membrane pass occupies residues 3-23 (IIIISLCLATILAFLLLKPLL). A heme-binding site is contributed by Cys-439.

Belongs to the cytochrome P450 family. It depends on heme as a cofactor.

The protein localises to the membrane. This Arabidopsis thaliana (Mouse-ear cress) protein is Cytochrome P450 71A15 (CYP71A15).